Consider the following 411-residue polypeptide: Glutamate dehydrogenase 2 (411 aa).

The active site involves Lys102.

Belongs to the Glu/Leu/Phe/Val dehydrogenases family.

The protein localises to the mitochondrion. It catalyses the reaction L-glutamate + NAD(+) + H2O = 2-oxoglutarate + NH4(+) + NADH + H(+). The catalysed reaction is L-glutamate + NADP(+) + H2O = 2-oxoglutarate + NH4(+) + NADPH + H(+). This is Glutamate dehydrogenase 2 (GDH2) from Arabidopsis thaliana (Mouse-ear cress).